The primary structure comprises 375 residues: MSKTLALTEELIALSSVTPEDKGCQSRLIELLEPLGFVCETIESDGVTNLWARKGTTQPLLVFAGHTDVVPTGPLEQWTSPPFVPTQREGKLYGRGAADMKTSIAAMVVAAEEFVQAHPAHKGSIGFLITSDEEGPATDGTVIVCNALKARGEQLDYCVVGEPTSSDVLGDTIKNGRRGSMSGKLTVKGIQGHIAYPQLARNPIHQCAPALAELVAEKWDDGNEYYLPTSWQVSNIHGGAGASNVIPGNVVIDFNFRFCTASTVDGLQKRVHAILDKHGLEYDLKWSISGHPFLTPKGTLSDAMSDAIKSETGVTTELSTTGGTSDGRFIAQICPQVVEFGPPNGSIHKIDEHIEVRFIDPLKNIYRRTMENLLL.

A Zn(2+)-binding site is contributed by His66. The active site involves Asp68. Zn(2+) is bound at residue Asp99. Glu133 serves as the catalytic Proton acceptor. Positions 134, 162, and 348 each coordinate Zn(2+).

It belongs to the peptidase M20A family. DapE subfamily. As to quaternary structure, homodimer. The cofactor is Zn(2+). Requires Co(2+) as cofactor.

The enzyme catalyses N-succinyl-(2S,6S)-2,6-diaminopimelate + H2O = (2S,6S)-2,6-diaminopimelate + succinate. It participates in amino-acid biosynthesis; L-lysine biosynthesis via DAP pathway; LL-2,6-diaminopimelate from (S)-tetrahydrodipicolinate (succinylase route): step 3/3. Catalyzes the hydrolysis of N-succinyl-L,L-diaminopimelic acid (SDAP), forming succinate and LL-2,6-diaminopimelate (DAP), an intermediate involved in the bacterial biosynthesis of lysine and meso-diaminopimelic acid, an essential component of bacterial cell walls. This chain is Succinyl-diaminopimelate desuccinylase, found in Janthinobacterium sp. (strain Marseille) (Minibacterium massiliensis).